We begin with the raw amino-acid sequence, 467 residues long: Matrix metalloproteinase-18 (467 aa).

The signal sequence occupies residues 1–17 (MNSLLLKLLLCVAITAA). A propeptide spanning residues 18 to 99 (FPADKQDEPP…PRCGVYDVGQ (82 aa)) is cleaved from the precursor. Positions 90-97 (PRCGVYDV) match the Cysteine switch motif. The Zn(2+) site is built by cysteine 92 and histidine 218. The active site involves glutamate 219. Zn(2+) contacts are provided by histidine 222 and histidine 228. Hemopexin repeat units follow at residues 277–326 (PSRC…WPSL), 327–373 (PTNI…GFPK), 375–423 (VKRI…FPGI), and 424–467 (PDKI…WLGC). Cysteines 280 and 467 form a disulfide.

The protein belongs to the peptidase M10A family. It depends on Zn(2+) as a cofactor. Ca(2+) serves as cofactor. Expressed only transiently in whole animal, at time when tadpole feeding begins.

The protein resides in the secreted. Its subcellular location is the extracellular space. The protein localises to the extracellular matrix. Its activity is regulated as follows. Up-regulated in the tail by thyroid hormone. In terms of biological role, cleaves collagen type I. May play a role in larval tissue degeneration and adult organogenesis during amphibian metamorphosis. May be involved in tail resorption. The chain is Matrix metalloproteinase-18 (mmp18) from Xenopus laevis (African clawed frog).